A 576-amino-acid polypeptide reads, in one-letter code: Formate--tetrahydrofolate ligase (576 aa).

64 to 71 (TPLGEGKT) contributes to the ATP binding site.

The protein belongs to the formate--tetrahydrofolate ligase family.

It carries out the reaction (6S)-5,6,7,8-tetrahydrofolate + formate + ATP = (6R)-10-formyltetrahydrofolate + ADP + phosphate. The protein operates within one-carbon metabolism; tetrahydrofolate interconversion. The sequence is that of Formate--tetrahydrofolate ligase from Aeromonas hydrophila subsp. hydrophila (strain ATCC 7966 / DSM 30187 / BCRC 13018 / CCUG 14551 / JCM 1027 / KCTC 2358 / NCIMB 9240 / NCTC 8049).